Consider the following 146-residue polypeptide: Transcriptional regulator MraZ (146 aa).

SpoVT-AbrB domains are found at residues alanine 9 to alanine 55 and alanine 81 to arginine 124.

Belongs to the MraZ family. As to quaternary structure, forms oligomers.

It localises to the cytoplasm. It is found in the nucleoid. This chain is Transcriptional regulator MraZ, found in Methylibium petroleiphilum (strain ATCC BAA-1232 / LMG 22953 / PM1).